Here is a 371-residue protein sequence, read N- to C-terminus: Phosphatase IMPL1, chloroplastic (371 aa).

The transit peptide at 1-60 (MGRSLIFSGNMSLRISHLPRSSLPLQNPISGRTVNRTFRYRCTRILSNSFKSTTRLQTKA) directs the protein to the chloroplast. At V61 the chain carries N-acetylvaline. The Mg(2+) site is built by E148, D165, L167, and D168. Substrate is bound at residue E148. Substrate-binding positions include 167–170 (LDGT), 273–275 (GAA), E292, and D299. Mg(2+) is bound at residue D299.

The protein belongs to the inositol monophosphatase superfamily. It depends on Mg(2+) as a cofactor. Ubiquitous. Expressed in pistil and seed endosperm.

It localises to the plastid. The protein localises to the chloroplast stroma. It carries out the reaction a myo-inositol phosphate + H2O = myo-inositol + phosphate. The protein operates within polyol metabolism; myo-inositol biosynthesis; myo-inositol from D-glucose 6-phosphate: step 2/2. Functionally, phosphatase acting preferentially on D-myoinositol 1-phosphate (D-Ins 1-P). The chain is Phosphatase IMPL1, chloroplastic (IMPL1) from Arabidopsis thaliana (Mouse-ear cress).